The primary structure comprises 94 residues: Pyrimidine/purine nucleoside phosphorylase 2 (94 aa).

This sequence belongs to the nucleoside phosphorylase PpnP family.

It catalyses the reaction a purine D-ribonucleoside + phosphate = a purine nucleobase + alpha-D-ribose 1-phosphate. The catalysed reaction is adenosine + phosphate = alpha-D-ribose 1-phosphate + adenine. The enzyme catalyses cytidine + phosphate = cytosine + alpha-D-ribose 1-phosphate. It carries out the reaction guanosine + phosphate = alpha-D-ribose 1-phosphate + guanine. It catalyses the reaction inosine + phosphate = alpha-D-ribose 1-phosphate + hypoxanthine. The catalysed reaction is thymidine + phosphate = 2-deoxy-alpha-D-ribose 1-phosphate + thymine. The enzyme catalyses uridine + phosphate = alpha-D-ribose 1-phosphate + uracil. It carries out the reaction xanthosine + phosphate = alpha-D-ribose 1-phosphate + xanthine. In terms of biological role, catalyzes the phosphorolysis of diverse nucleosides, yielding D-ribose 1-phosphate and the respective free bases. Can use uridine, adenosine, guanosine, cytidine, thymidine, inosine and xanthosine as substrates. Also catalyzes the reverse reactions. This chain is Pyrimidine/purine nucleoside phosphorylase 2, found in Psychrobacter cryohalolentis (strain ATCC BAA-1226 / DSM 17306 / VKM B-2378 / K5).